We begin with the raw amino-acid sequence, 104 residues long: uncharacterized protein (104 aa).

This is an uncharacterized protein from Methanocaldococcus jannaschii (strain ATCC 43067 / DSM 2661 / JAL-1 / JCM 10045 / NBRC 100440) (Methanococcus jannaschii).